Here is a 783-residue protein sequence, read N- to C-terminus: BMP/retinoic acid-inducible neural-specific protein 2 (783 aa).

The first 33 residues, 1 to 33 (MRWPCSSWFRGLWPEAAPWAVLLALGVPGWVLA), serve as a signal peptide directing secretion. One can recognise an MACPF domain in the interval 85-281 (RYRIYREFAR…FVAAALSYIT (197 aa)). N-linked (GlcNAc...) asparagine glycosylation is found at Asn-185, Asn-354, Asn-473, Asn-579, Asn-626, and Asn-658.

This sequence belongs to the BRINP family. In terms of tissue distribution, weakly expressed in embryonic stem (ES) cells. Strongly expressed in ES-derived neural stem cells (NSCs).

It localises to the secreted. Functionally, inhibits neuronal cell proliferation by negative regulation of the cell cycle transition. This Mus musculus (Mouse) protein is BMP/retinoic acid-inducible neural-specific protein 2 (Brinp2).